A 299-amino-acid chain; its full sequence is MSSEPSSAAPESTIPRRIALSLQYEGSAFCGWQRQRNGNSVQAQLEAAIEQLDPYRPIQTFAAGRTDTGVHAAGQVVHFDCGDRIPPAKWAPALNGRLPFTIRVRESVLRPKDWHACYSATYRRYRYTIHNGRRPNLFLAPWSWHRYQLRLDESRMRDALNGMLGLHDFSAFMRAGSRRAHARTTVQEVDLVRQGDMVRVEIQASGFLYGMVRLLIAQLVAVGEHRLSVQDFEQRWRQRRRHEVREAAPGHGLCLLRAGYEQEIFTRAGWYDCQPWFFLAESDPPPDPPPLPEASGSEL.

Aspartate 67 acts as the Nucleophile in catalysis. Tyrosine 125 serves as a coordination point for substrate.

Belongs to the tRNA pseudouridine synthase TruA family. As to quaternary structure, homodimer.

It catalyses the reaction uridine(38/39/40) in tRNA = pseudouridine(38/39/40) in tRNA. In terms of biological role, formation of pseudouridine at positions 38, 39 and 40 in the anticodon stem and loop of transfer RNAs. In Parasynechococcus marenigrum (strain WH8102), this protein is tRNA pseudouridine synthase A.